Reading from the N-terminus, the 35-residue chain is Ranatuerin-2SPa (35 aa).

An intrachain disulfide couples C28 to C33.

Expressed by the skin glands.

It localises to the secreted. Functionally, antibacterial activity against Gram-positive bacterium S.aureus. Shows no detectable hemolytic activity towards human erythrocytes. The protein is Ranatuerin-2SPa of Lithobates septentrionalis (Mink frog).